The following is a 169-amino-acid chain: S-ribosylhomocysteine lyase (169 aa).

Positions 54, 58, and 128 each coordinate Fe cation.

The protein belongs to the LuxS family. In terms of assembly, homodimer. Fe cation serves as cofactor.

It catalyses the reaction S-(5-deoxy-D-ribos-5-yl)-L-homocysteine = (S)-4,5-dihydroxypentane-2,3-dione + L-homocysteine. Its function is as follows. Involved in the synthesis of autoinducer 2 (AI-2) which is secreted by bacteria and is used to communicate both the cell density and the metabolic potential of the environment. The regulation of gene expression in response to changes in cell density is called quorum sensing. Catalyzes the transformation of S-ribosylhomocysteine (RHC) to homocysteine (HC) and 4,5-dihydroxy-2,3-pentadione (DPD). The polypeptide is S-ribosylhomocysteine lyase (Shewanella sp. (strain MR-4)).